The chain runs to 407 residues: MEITLGIAMFTVIVLALAVLILFAKSKLVNSGDITIEINDDPGKAINLPAGGKLLGALANKGIFVSSACGGGGSCGQCIVKVTEGGGDILPTELSHISKREAKEGYRLSCQVNVKNSMKIELPEEVFGVKKWECTVISNDNKATFIKELKLQIPEGEEVPFRAGGYIQIEAEPHTVHYKDFDIPKEYHEDWDKFDLWRYTSKVDEHIIRAYSMASYPEEKGIIMLNVRIATPPPRNPDVPPGQMSSYIWSLKEGDKVTISGPFGEFFAKETDNEMVFIGGGAGMAPMRSHIFDQLKRLKSKRKMSFWYGARSKREMFYVEDFDMLQAENDNFVWHVALSDPLPEDDWDGYTGFIHNVLYENYLKNHEAPEDCEYYMCGPPVMNAAVIKMLKDLGVEDENILLDDFGG.

Residues 3–23 (ITLGIAMFTVIVLALAVLILF) form a helical membrane-spanning segment. The 2Fe-2S ferredoxin-type domain maps to 32–126 (GDITIEINDD…SMKIELPEEV (95 aa)). [2Fe-2S] cluster is bound by residues Cys-69, Cys-75, Cys-78, and Cys-110. In terms of domain architecture, FAD-binding FR-type spans 129–269 (VKKWECTVIS…SGPFGEFFAK (141 aa)).

It belongs to the NqrF family. As to quaternary structure, composed of six subunits; NqrA, NqrB, NqrC, NqrD, NqrE and NqrF. It depends on [2Fe-2S] cluster as a cofactor. The cofactor is FAD.

It is found in the cell inner membrane. It carries out the reaction a ubiquinone + n Na(+)(in) + NADH + H(+) = a ubiquinol + n Na(+)(out) + NAD(+). In terms of biological role, NQR complex catalyzes the reduction of ubiquinone-1 to ubiquinol by two successive reactions, coupled with the transport of Na(+) ions from the cytoplasm to the periplasm. The first step is catalyzed by NqrF, which accepts electrons from NADH and reduces ubiquinone-1 to ubisemiquinone by a one-electron transfer pathway. This chain is Na(+)-translocating NADH-quinone reductase subunit F, found in Histophilus somni (strain 129Pt) (Haemophilus somnus).